We begin with the raw amino-acid sequence, 180 residues long: Large ribosomal subunit protein uL5c (180 aa).

It belongs to the universal ribosomal protein uL5 family. As to quaternary structure, part of the 50S ribosomal subunit; contacts the 5S rRNA.

It localises to the plastid. The protein localises to the chloroplast. In terms of biological role, binds 5S rRNA, forms part of the central protuberance of the 50S subunit. The sequence is that of Large ribosomal subunit protein uL5c (rpl5) from Tupiella akineta (Green alga).